The following is a 309-amino-acid chain: Small ribosomal subunit protein mS23 (309 aa).

Belongs to the mitochondrion-specific ribosomal protein mS23 family. As to quaternary structure, component of the mitochondrial small ribosomal subunit.

It is found in the mitochondrion. The polypeptide is Small ribosomal subunit protein mS23 (RSM25) (Lodderomyces elongisporus (strain ATCC 11503 / CBS 2605 / JCM 1781 / NBRC 1676 / NRRL YB-4239) (Yeast)).